The following is a 286-amino-acid chain: Light-independent protochlorophyllide reductase iron-sulfur ATP-binding protein (286 aa).

Residues 10–15 (GIGKST) and Lys-39 contribute to the ATP site. Ser-14 serves as a coordination point for Mg(2+). [4Fe-4S] cluster is bound by residues Cys-95 and Cys-129. 180–181 (NR) lines the ATP pocket.

This sequence belongs to the NifH/BchL/ChlL family. In terms of assembly, homodimer. Protochlorophyllide reductase is composed of three subunits; ChlL, ChlN and ChlB. The cofactor is [4Fe-4S] cluster.

It carries out the reaction chlorophyllide a + oxidized 2[4Fe-4S]-[ferredoxin] + 2 ADP + 2 phosphate = protochlorophyllide a + reduced 2[4Fe-4S]-[ferredoxin] + 2 ATP + 2 H2O. It participates in porphyrin-containing compound metabolism; chlorophyll biosynthesis (light-independent). Component of the dark-operative protochlorophyllide reductase (DPOR) that uses Mg-ATP and reduced ferredoxin to reduce ring D of protochlorophyllide (Pchlide) to form chlorophyllide a (Chlide). This reaction is light-independent. The L component serves as a unique electron donor to the NB-component of the complex, and binds Mg-ATP. The chain is Light-independent protochlorophyllide reductase iron-sulfur ATP-binding protein from Cyanothece sp. (strain PCC 7425 / ATCC 29141).